Here is a 243-residue protein sequence, read N- to C-terminus: 1-(5-phosphoribosyl)-5-[(5-phosphoribosylamino)methylideneamino] imidazole-4-carboxamide isomerase (243 aa).

Asp-10 acts as the Proton acceptor in catalysis. Asp-129 acts as the Proton donor in catalysis.

Belongs to the HisA/HisF family.

The protein localises to the cytoplasm. The enzyme catalyses 1-(5-phospho-beta-D-ribosyl)-5-[(5-phospho-beta-D-ribosylamino)methylideneamino]imidazole-4-carboxamide = 5-[(5-phospho-1-deoxy-D-ribulos-1-ylimino)methylamino]-1-(5-phospho-beta-D-ribosyl)imidazole-4-carboxamide. It functions in the pathway amino-acid biosynthesis; L-histidine biosynthesis; L-histidine from 5-phospho-alpha-D-ribose 1-diphosphate: step 4/9. This chain is 1-(5-phosphoribosyl)-5-[(5-phosphoribosylamino)methylideneamino] imidazole-4-carboxamide isomerase, found in Nocardia farcinica (strain IFM 10152).